We begin with the raw amino-acid sequence, 100 residues long: Co-chaperonin GroES (100 aa).

This sequence belongs to the GroES chaperonin family. Heptamer of 7 subunits arranged in a ring. Interacts with the chaperonin GroEL.

It localises to the cytoplasm. Its function is as follows. Together with the chaperonin GroEL, plays an essential role in assisting protein folding. The GroEL-GroES system forms a nano-cage that allows encapsulation of the non-native substrate proteins and provides a physical environment optimized to promote and accelerate protein folding. GroES binds to the apical surface of the GroEL ring, thereby capping the opening of the GroEL channel. This Mycolicibacterium smegmatis (strain ATCC 700084 / mc(2)155) (Mycobacterium smegmatis) protein is Co-chaperonin GroES.